A 253-amino-acid polypeptide reads, in one-letter code: Ipsdienol dehydrogenase (253 aa).

NAD(+)-binding positions include 12 to 40 (VTGGGSGLGEATAKLLLTEGARVTIFSRN) and D63. Substrate is bound at residue S149. Y162 (proton acceptor) is an active-site residue. K166 lines the NAD(+) pocket.

The protein belongs to the short-chain dehydrogenases/reductases (SDR) family. As to expression, specifically expressed in male midguts. Expressed at higher level in the anterior midgut of fed males.

Its subcellular location is the cytoplasm. The protein localises to the cytosol. The enzyme catalyses (4R)-ipsdienol + NADP(+) = ipsdienone + NADPH + H(+). The catalysed reaction is (4R)-ipsdienol + NAD(+) = ipsdienone + NADH + H(+). Its function is as follows. Catalyzes the oxidation of racemic ipsdienol and (4R)-(-)-ipsdienol to form ipsdienone (2-methyl-6-methylene-2,7-octadien-4-one), an intermediate in the biosynthesis of pheromonal ipsdienol in male pine engraver beetles. In contrast, (4S)-(+)-ipsdienol is not a substrate. The protein is Ipsdienol dehydrogenase of Ips pini (Pine engraver beetle).